Consider the following 322-residue polypeptide: Daunorubicin resistance ATP-binding protein DrrA2 (322 aa).

Residues 6 to 236 (VRAEAMEKRY…VGGDRIEVVV (231 aa)) form the ABC transporter domain. 38–45 (GPNGAGKT) contacts ATP.

Belongs to the ABC transporter superfamily. Drug exporter-1 (DrugE1) (TC 3.A.1.105) family. As to quaternary structure, the complex is probably composed of two ATP-binding proteins (DrrA2) and two transmembrane proteins (DrrB2).

The protein resides in the cell membrane. The catalysed reaction is daunorubicin(in) + ATP + H2O = daunorubicin(out) + ADP + phosphate + H(+). Its function is as follows. Part of the ABC transporter complex DrrA2B2 involved in daunorubicin efflux. Responsible for energy coupling to the transport system. Confers self-resistance to daunorubicin, an antibiotic produced by S.coeruleorubidus. This chain is Daunorubicin resistance ATP-binding protein DrrA2, found in Streptomyces coeruleorubidus.